A 611-amino-acid chain; its full sequence is Zinc metalloproteinase-disintegrin-like ohanin (611 aa).

The signal sequence occupies residues 1–20 (MIQVLLVTICLVVFPYQGSS). A propeptide spanning residues 21–187 (IILESGKVND…WESDEPIEKI (167 aa)) is cleaved from the precursor. The region spanning 198–393 (KYLELYIVAD…DTPQCLINKP (196 aa)) is the Peptidase M12B domain. Asn217 and Asn260 each carry an N-linked (GlcNAc...) asparagine glycan. 3 cysteine pairs are disulfide-bonded: Cys307-Cys388, Cys347-Cys372, and Cys349-Cys354. Zn(2+) is bound at residue His332. Residue Glu333 is part of the active site. Zn(2+) is bound by residues His336 and His342. Asn395 is a glycosylation site (N-linked (GlcNAc...) asparagine). Positions 401–487 (NAVCGNYVEE…ECPMDRFHKN (87 aa)) constitute a Disintegrin domain. Intrachain disulfides connect Cys404-Cys433, Cys415-Cys428, Cys417-Cys423, Cys427-Cys450, Cys441-Cys447, Cys446-Cys472, Cys459-Cys479, Cys466-Cys498, Cys491-Cys503, Cys510-Cys560, Cys525-Cys578, Cys538-Cys548, Cys555-Cys603, and Cys597-Cys608. Residues 465 to 467 (ECD) carry the D/ECD-tripeptide motif. Asn528 carries N-linked (GlcNAc...) asparagine glycosylation.

This sequence belongs to the venom metalloproteinase (M12B) family. P-III subfamily. P-IIIa sub-subfamily. As to quaternary structure, monomer. The cofactor is Zn(2+). Expressed by the venom gland.

It is found in the secreted. Its activity is regulated as follows. Inhibited by EDTA, but not by PMSF. Functionally, snake venom zinc metalloproteinase that has hemorrhagic activity. Inhibits ADP-, TMVA- and stejnulxin-induced platelet aggregation in a dose-dependent manner (on washed platelet, but not on platelet rich plasm). Also specifically degrades alpha-chain of fibrinogen (FGA). This is Zinc metalloproteinase-disintegrin-like ohanin from Ophiophagus hannah (King cobra).